A 388-amino-acid chain; its full sequence is Protein DJ-1 homolog D (388 aa).

2 PfpI endopeptidase domains span residues 5 to 190 (RTVL…KALG) and 198 to 383 (KRIL…ALLG). Cys-120 acts as the Nucleophile in catalysis. Cys-120 carries the post-translational modification Cysteine sulfenic acid (-SOH). The active site involves His-121. The active-site Nucleophile is Cys-313. Cys-313 carries the cysteine sulfinic acid (-SO2H) modification. His-314 is an active-site residue.

Belongs to the peptidase C56 family. In terms of assembly, homotrimer. In terms of processing, cys-120 and Cys-313 are oxidized to sulfinic acid.

It catalyses the reaction (R)-S-lactoylglutathione = methylglyoxal + glutathione. Its function is as follows. Possesses glyoxalase I activity. Catalyzes the conversion of hemimercaptal, formed from methylglyoxal and glutathione, to S-lactoylglutathione. May be involved in oxidative stress response. This is Protein DJ-1 homolog D (DJ1D) from Arabidopsis thaliana (Mouse-ear cress).